A 692-amino-acid chain; its full sequence is Elongation factor G (692 aa).

The tr-type G domain maps to 8-282; the sequence is ENTRNIGIMA…GVVDYLPSPV (275 aa). Residues 17–24, 81–85, and 135–138 each bind GTP; these read AHIDAGKT, DTPGH, and NKMD.

Belongs to the TRAFAC class translation factor GTPase superfamily. Classic translation factor GTPase family. EF-G/EF-2 subfamily.

The protein localises to the cytoplasm. Its function is as follows. Catalyzes the GTP-dependent ribosomal translocation step during translation elongation. During this step, the ribosome changes from the pre-translocational (PRE) to the post-translocational (POST) state as the newly formed A-site-bound peptidyl-tRNA and P-site-bound deacylated tRNA move to the P and E sites, respectively. Catalyzes the coordinated movement of the two tRNA molecules, the mRNA and conformational changes in the ribosome. This chain is Elongation factor G, found in Anoxybacillus flavithermus (strain DSM 21510 / WK1).